Here is a 95-residue protein sequence, read N- to C-terminus: Large ribosomal subunit protein bL25 (95 aa).

It belongs to the bacterial ribosomal protein bL25 family. In terms of assembly, part of the 50S ribosomal subunit; part of the 5S rRNA/L5/L18/L25 subcomplex. Contacts the 5S rRNA. Binds to the 5S rRNA independently of L5 and L18.

Its function is as follows. This is one of the proteins that binds to the 5S RNA in the ribosome where it forms part of the central protuberance. This is Large ribosomal subunit protein bL25 from Actinobacillus succinogenes (strain ATCC 55618 / DSM 22257 / CCUG 43843 / 130Z).